The sequence spans 187 residues: UPF0301 protein VS_2679 (187 aa).

This sequence belongs to the UPF0301 (AlgH) family.

In Vibrio atlanticus (strain LGP32) (Vibrio splendidus (strain Mel32)), this protein is UPF0301 protein VS_2679.